Reading from the N-terminus, the 127-residue chain is Urotensin-2 (127 aa).

The N-terminal stretch at 1 to 16 (MSKLFFCCLILAGSFC) is a signal peptide. The propeptide occupies 17–111 (SFRSLPIIVP…RLQSKDRKQF (95 aa)). An intrachain disulfide couples Cys-121 to Cys-126.

The protein belongs to the urotensin-2 family. As to expression, central nervous system. Spinal cord.

The protein localises to the secreted. Its function is as follows. Involved in smooth muscle stimulating and ion mobilizing activities. It has a suggested role as a corticotropin-releasing factor. The protein is Urotensin-2 (UTS2) of Pelophylax ridibundus (Marsh frog).